A 453-amino-acid chain; its full sequence is Anthocyanidin 3-O-glucosyltransferase (453 aa).

The active-site Proton acceptor is the His-17. His-17 contributes to the an anthocyanidin binding site. The Charge relay role is filled by Asp-117. Thr-139 is a UDP-alpha-D-glucose binding site. His-148 is an an anthocyanidin binding site. The UDP-alpha-D-glucose site is built by Ala-331, Gln-333, His-348, Trp-351, Asn-352, Ser-353, and Glu-356. Gly-371 contributes to the an anthocyanidin binding site. Residues Asp-372 and Gln-373 each contribute to the UDP-alpha-D-glucose site.

The protein belongs to the UDP-glycosyltransferase family.

It carries out the reaction an anthocyanidin + UDP-alpha-D-glucose + H(+) = an anthocyanidin 3-O-beta-D-glucoside + UDP. The enzyme catalyses delphinidin + UDP-alpha-D-glucose = delphinidin 3-O-beta-D-glucoside + UDP. It catalyses the reaction pelargonidin + UDP-alpha-D-glucose = pelargonidin 3-O-beta-D-glucoside + UDP. The catalysed reaction is cyanidin + UDP-alpha-D-glucose = cyanidin 3-O-beta-D-glucoside + UDP + H(+). It functions in the pathway pigment biosynthesis; anthocyanin biosynthesis. In terms of biological role, in the presence of other necessary color factors, this glycosylation reaction allows the accumulation of anthocyanin pigments. Anthocyanidins are the preferred substrates, while flavonols are only a minor substrate in vitro. The sequence is that of Anthocyanidin 3-O-glucosyltransferase from Gentiana triflora (Clustered gentian).